The primary structure comprises 408 residues: LIN1-like protein (408 aa).

The tract at residues 1–161 (MKRTLRNPGN…SVPSSPKRMS (161 aa)) is disordered. Positions 41 to 52 (YYESESEEDEDQ) are enriched in acidic residues. Composition is skewed to basic and acidic residues over residues 53-62 (ILNKEKKEGQ), 73-109 (DEKR…KEVL), and 119-129 (NGKYSKLRYED). The GYF domain maps to 344–402 (SSQYNFKWEFDDKTYGPYTASQIQAWSNEGYFTDAKHAAFIQLANMDEWMYPNNICFCD).

This sequence belongs to the LIN1 family.

The chain is LIN1-like protein from Schizosaccharomyces pombe (strain 972 / ATCC 24843) (Fission yeast).